Reading from the N-terminus, the 551-residue chain is Transcription factor 7-like 1-B (551 aa).

A compositionally biased stretch (gly residues) spans 1–11; the sequence is MPQLNSGGGDE. Positions 1–61 are interaction with CTNNB1-A; the sequence is MPQLNSGGGD…SENHSSDSDS (61 aa). 4 disordered regions span residues 1-77, 183-213, 391-474, and 492-515; these read MPQL…EKPR, GTPP…PYYP, WSAR…SLTT, and SPSS…SRPI. 2 stretches are compositionally biased toward basic and acidic residues: residues 17-32 and 52-77; these read ELIR…EKSP and SENH…EKPR. The segment at 109 to 312 is interaction with AES and TLE4-A; the sequence is LGGHYLPNGA…SPNLSTKSNV (204 aa). Positions 324 to 392 form a DNA-binding region, HMG box; the sequence is IKKPLNAFML…LHSQLYPSWS (69 aa). The span at 407–416 shows a compositional bias: basic and acidic residues; it reads KQSPEMENYT. The interaction with CTBP-B stretch occupies residues 408 to 551; sequence QSPEMENYTK…PLSLVTRSSD (144 aa). A compositionally biased stretch (low complexity) spans 445 to 464; that stretch reads SPATPSAALASPAAPAATHS. Polar residues predominate over residues 465 to 474; it reads EQAQPLSLTT.

It belongs to the TCF/LEF family. Interacts with csnk1e, ctnnb1-A, ctbp-B, dact1-A and gsk3b. May interact with ase and tle4-A. Interacts with tle1-B. Post-translationally, phosphorylated. Phosphorylation by csnk1e promotes binding to ctnnb1-A while phosphorylation by gsk3b may reverse this effect.

The protein localises to the nucleus. Its function is as follows. Participates in the Wnt signaling pathway. Binds to DNA and acts as a repressor in the absence of ctnnb1-A and possibly ctnnb1-B, and as an activator in the presence of these proteins. Required early in development for the establishment of the dorsal body axis in response to maternal Wnt signaling. In Xenopus laevis (African clawed frog), this protein is Transcription factor 7-like 1-B (tcf7l1-b).